Here is a 368-residue protein sequence, read N- to C-terminus: Phospho-N-acetylmuramoyl-pentapeptide-transferase (368 aa).

9 helical membrane-spanning segments follow: residues 30 to 50, 72 to 92, 98 to 118, 139 to 159, 170 to 190, 201 to 221, 238 to 258, 262 to 284, and 345 to 365; these read AAAI…IRFL, VPTM…LLWA, HVWL…IDDY, VALG…SVLL, FSVD…TAVS, GLAA…AYLG, AGEI…FLWF, PAEV…VIAL, and KIVI…LMTL.

This sequence belongs to the glycosyltransferase 4 family. MraY subfamily. The cofactor is Mg(2+).

The protein resides in the cell inner membrane. It carries out the reaction UDP-N-acetyl-alpha-D-muramoyl-L-alanyl-gamma-D-glutamyl-meso-2,6-diaminopimeloyl-D-alanyl-D-alanine + di-trans,octa-cis-undecaprenyl phosphate = di-trans,octa-cis-undecaprenyl diphospho-N-acetyl-alpha-D-muramoyl-L-alanyl-D-glutamyl-meso-2,6-diaminopimeloyl-D-alanyl-D-alanine + UMP. It participates in cell wall biogenesis; peptidoglycan biosynthesis. Catalyzes the initial step of the lipid cycle reactions in the biosynthesis of the cell wall peptidoglycan: transfers peptidoglycan precursor phospho-MurNAc-pentapeptide from UDP-MurNAc-pentapeptide onto the lipid carrier undecaprenyl phosphate, yielding undecaprenyl-pyrophosphoryl-MurNAc-pentapeptide, known as lipid I. The sequence is that of Phospho-N-acetylmuramoyl-pentapeptide-transferase from Chlorobaculum parvum (strain DSM 263 / NCIMB 8327) (Chlorobium vibrioforme subsp. thiosulfatophilum).